Consider the following 591-residue polypeptide: Metalloendopeptidase OPG085 (591 aa).

H41 provides a ligand contact to Zn(2+). Residue E44 is part of the active site. Zn(2+) is bound by residues H45 and E112.

Belongs to the peptidase M44 family. Zn(2+) serves as cofactor. In terms of processing, undergoes proteolytic processing during the course of infection. May be cleaved into 46 kDa and 22 kDa products (Potential).

The protein localises to the virion. Its function is as follows. Probably involved in maturation of some viral proteins by processing them preferentially at Ala-Gly-|-Ser/Thr/Lys motifs. Does not seem to be responsible for the cleavage of major core proteins. This Homo sapiens (Human) protein is Metalloendopeptidase OPG085 (OPG085).